Reading from the N-terminus, the 429-residue chain is Argininosuccinate lyase (429 aa).

It belongs to the lyase 1 family. Argininosuccinate lyase subfamily.

It localises to the cytoplasm. The catalysed reaction is 2-(N(omega)-L-arginino)succinate = fumarate + L-arginine. The protein operates within amino-acid biosynthesis; L-arginine biosynthesis; L-arginine from L-ornithine and carbamoyl phosphate: step 3/3. The sequence is that of Argininosuccinate lyase from Pyrobaculum islandicum (strain DSM 4184 / JCM 9189 / GEO3).